The primary structure comprises 417 residues: Pre-mRNA-splicing factor RBM22 (417 aa).

A C3H1-type zinc finger spans residues 159–186; sequence RNRPHICSFWVKGECKRGEECPYRHEKP. One can recognise an RRM domain in the interval 232–305; sequence TTLYVGGLGD…RRLNVKWGRS (74 aa). 2 disordered regions span residues 303–348 and 369–417; these read GRSQ…SANY and GLSG…PSSG. Over residues 309 to 318 the composition is skewed to basic and acidic residues; the sequence is RGKEREHDGS. Residues 369–391 are compositionally biased toward pro residues; that stretch reads GLSGPPPGFGPHMFPPMAPPPFL.

Belongs to the SLT11 family. As to quaternary structure, component of the pre-catalytic and catalytic spliceosome complexes. Component of the postcatalytic spliceosome P complex.

It is found in the nucleus. It localises to the cytoplasm. Required for pre-mRNA splicing as component of the activated spliceosome. Involved in the first step of pre-mRNA splicing. Binds directly to the internal stem-loop (ISL) domain of the U6 snRNA and to the pre-mRNA intron near the 5' splice site during the activation and catalytic phases of the spliceosome cycle. This Xenopus laevis (African clawed frog) protein is Pre-mRNA-splicing factor RBM22 (rbm22).